The following is a 121-amino-acid chain: Small ribosomal subunit protein uS13 (121 aa).

Residues 94–121 (GLPLRGQRTRTNARTRKGPRKAGVALKK) form a disordered region.

This sequence belongs to the universal ribosomal protein uS13 family. Part of the 30S ribosomal subunit. Forms a loose heterodimer with protein S19. Forms two bridges to the 50S subunit in the 70S ribosome.

Located at the top of the head of the 30S subunit, it contacts several helices of the 16S rRNA. In the 70S ribosome it contacts the 23S rRNA (bridge B1a) and protein L5 of the 50S subunit (bridge B1b), connecting the 2 subunits; these bridges are implicated in subunit movement. Contacts the tRNAs in the A and P-sites. The chain is Small ribosomal subunit protein uS13 from Ralstonia nicotianae (strain ATCC BAA-1114 / GMI1000) (Ralstonia solanacearum).